Here is a 267-residue protein sequence, read N- to C-terminus: 3-methyl-2-oxobutanoate hydroxymethyltransferase (267 aa).

Residues aspartate 46 and aspartate 85 each contribute to the Mg(2+) site. 3-methyl-2-oxobutanoate-binding positions include 46-47 (DS), aspartate 85, and lysine 115. Mg(2+) is bound at residue glutamate 117. Catalysis depends on glutamate 184, which acts as the Proton acceptor.

It belongs to the PanB family. As to quaternary structure, homodecamer; pentamer of dimers. Requires Mg(2+) as cofactor.

It localises to the cytoplasm. The catalysed reaction is 3-methyl-2-oxobutanoate + (6R)-5,10-methylene-5,6,7,8-tetrahydrofolate + H2O = 2-dehydropantoate + (6S)-5,6,7,8-tetrahydrofolate. It functions in the pathway cofactor biosynthesis; (R)-pantothenate biosynthesis; (R)-pantoate from 3-methyl-2-oxobutanoate: step 1/2. In terms of biological role, catalyzes the reversible reaction in which hydroxymethyl group from 5,10-methylenetetrahydrofolate is transferred onto alpha-ketoisovalerate to form ketopantoate. In Geotalea uraniireducens (strain Rf4) (Geobacter uraniireducens), this protein is 3-methyl-2-oxobutanoate hydroxymethyltransferase.